Reading from the N-terminus, the 391-residue chain is Testis-expressed protein 9 (391 aa).

Disordered stretches follow at residues 1–31 (MAGR…PGPD) and 65–85 (QEVR…EDDY). A coiled-coil region spans residues 188–351 (IGTEAQIRFL…EKQKGELMIG (164 aa)).

It is found in the cytoplasm. The protein resides in the cytoskeleton. Its subcellular location is the microtubule organizing center. It localises to the centrosome. The protein localises to the centriolar satellite. The protein is Testis-expressed protein 9 (TEX9) of Homo sapiens (Human).